A 181-amino-acid chain; its full sequence is NADH-quinone oxidoreductase subunit B (181 aa).

Positions 60, 61, 125, and 155 each coordinate [4Fe-4S] cluster.

It belongs to the complex I 20 kDa subunit family. In terms of assembly, NDH-1 is composed of 14 different subunits. Subunits NuoB, C, D, E, F, and G constitute the peripheral sector of the complex. Requires [4Fe-4S] cluster as cofactor.

The protein localises to the cell inner membrane. The catalysed reaction is a quinone + NADH + 5 H(+)(in) = a quinol + NAD(+) + 4 H(+)(out). NDH-1 shuttles electrons from NADH, via FMN and iron-sulfur (Fe-S) centers, to quinones in the respiratory chain. Couples the redox reaction to proton translocation (for every two electrons transferred, four hydrogen ions are translocated across the cytoplasmic membrane), and thus conserves the redox energy in a proton gradient. This chain is NADH-quinone oxidoreductase subunit B, found in Novosphingobium aromaticivorans (strain ATCC 700278 / DSM 12444 / CCUG 56034 / CIP 105152 / NBRC 16084 / F199).